The chain runs to 615 residues: Delta(14)-sterol reductase LBR (615 aa).

One can recognise a Tudor domain in the interval 1 to 62 (MPSRKFADGE…DIKPLTSFRQ (62 aa)). At 1–211 (MPSRKFADGE…IRAKDLEFGG (211 aa)) the chain is on the nuclear side. The segment at 53–109 (DIKPLTSFRQRKGGSTSSSPSRRRGSRSRSRSRSPGRPPKSARRSASASHQADIKEA) is disordered. Position 55 is an N6-acetyllysine (K55). Residue T58 is modified to Phosphothreonine. A phosphoserine mark is found at S59 and S67. S71 and S86 each carry phosphoserine; by CDK1. Basic residues predominate over residues 73–86 (SRRRGSRSRSRSRS). Residues S97 and S99 each carry the phosphoserine modification. T118 carries the phosphothreonine modification. S128 carries the post-translational modification Phosphoserine. A Phosphothreonine modification is found at T200. A run of 8 helical transmembrane segments spans residues 212–232 (VPGV…LLLM), 258–278 (VFGV…LPIG), 299–319 (FYAF…GVEF), 326–346 (FLQF…YLYM), 415–435 (VPSL…VDAL), 447–467 (IIHD…VPFI), 481–501 (EVSW…YVIF), and 561–581 (ACGF…MLLV). K594 and K601 each carry N6-acetyllysine.

The protein belongs to the ERG4/ERG24 family. In terms of assembly, interacts with CBX5. Interacts with DNA. Interaction with DNA is sequence independent with higher affinity for supercoiled and relaxed circular DNA than linear DNA. Interacts with lamin B. Interacts with CLNK. Interacts with TMEM147; promoting LBR localization to the nucleus inner membrane. Phosphorylated by CDK1 in mitosis when the inner nuclear membrane breaks down into vesicles that dissociate from the lamina and the chromatin. It is phosphorylated by different protein kinases in interphase when the membrane is associated with these structures. Phosphorylation of LBR and HP1 proteins may be responsible for some of the alterations in chromatin organization and nuclear structure which occur at various times during the cell cycle. Phosphorylated by SRPK1. In late anaphase LBR is dephosphorylated, probably by PP1 and/or PP2A, allowing reassociation with chromatin.

It localises to the nucleus inner membrane. The protein localises to the nucleus. It is found in the cytoplasm. Its subcellular location is the endoplasmic reticulum membrane. It catalyses the reaction 5alpha-cholest-8,14-dien-3beta-ol + NADPH + H(+) = 5alpha-cholest-8-en-3beta-ol + NADP(+). It carries out the reaction 4,4-dimethyl-5alpha-cholesta-8,24-dien-3beta-ol + NADP(+) = 4,4-dimethyl-5alpha-cholesta-8,14,24-trien-3beta-ol + NADPH + H(+). The catalysed reaction is 4,4-dimethyl-8,14-cholestadien-3beta-ol + NADPH + H(+) = 4,4-dimethyl-5alpha-cholest-8-en-3beta-ol + NADP(+). It functions in the pathway steroid biosynthesis; cholesterol biosynthesis. Functionally, catalyzes the reduction of the C14-unsaturated bond of lanosterol, as part of the metabolic pathway leading to cholesterol biosynthesis. Plays a critical role in myeloid cell cholesterol biosynthesis which is essential to both myeloid cell growth and functional maturation. Mediates the activation of NADPH oxidases, perhaps by maintaining critical levels of cholesterol required for membrane lipid raft formation during neutrophil differentiation. Anchors the lamina and the heterochromatin to the inner nuclear membrane. In Pongo abelii (Sumatran orangutan), this protein is Delta(14)-sterol reductase LBR (LBR).